Reading from the N-terminus, the 1418-residue chain is ABC transporter G family member 38 (1418 aa).

The interval 1–27 is disordered; that stretch reads MAHYRVSSEVENIMNRDRSHRKNEEED. The 273-residue stretch at 147–419 folds into the ABC transporter 1 domain; it reads TKIRVLPDRK…FEFMGFKCPE (273 aa). 179 to 186 is a binding site for ATP; it reads GPPGSGKS. The ABC transmembrane type-2 1 domain occupies 497-710; that stretch reads ELLKACLERE…IQTAVSVNEF (214 aa). A run of 6 helical transmembrane segments spans residues 516–536, 548–568, 600–620, 634–654, 659–679, and 729–749; these read TFVL…VVFW, GIIY…SGFF, IITF…TYFT, YLVL…IAAV, VVSN…SGYV, and FFVE…STIL. An ABC transporter 2 domain is found at 821 to 1073; sequence MTFENITYSV…QLIEYFEGIR (253 aa). 866-873 contributes to the ATP binding site; that stretch reads GVSGAGKT. In terms of domain architecture, ABC transmembrane type-2 2 spans 1146-1360; sequence SQFQACLWKQ…GLYGLTIAQY (215 aa). Helical transmembrane passes span 1167-1187, 1197-1217, 1249-1269, 1284-1304, 1310-1330, 1341-1361, and 1387-1407; these read AVRF…FWSL, IFNS…QSAA, VIIE…IVYG, IFFT…VISV, IASI…GFTI, WFTY…AQYG, and FLWV…FIYA.

This sequence belongs to the ABC transporter superfamily. ABCG family. PDR (TC 3.A.1.205) subfamily. As to expression, expressed in roots and siliques at low levels.

It localises to the membrane. Functionally, may be a general defense protein. This Arabidopsis thaliana (Mouse-ear cress) protein is ABC transporter G family member 38 (ABCG38).